Reading from the N-terminus, the 246-residue chain is Probable transcriptional regulatory protein CTC_02215 (246 aa).

This sequence belongs to the TACO1 family.

It is found in the cytoplasm. In Clostridium tetani (strain Massachusetts / E88), this protein is Probable transcriptional regulatory protein CTC_02215.